We begin with the raw amino-acid sequence, 133 residues long: Sigma factor-binding protein Crl (133 aa).

An essential for activity region spans residues 99 to 122; it reads TLDDFYVKLTKFVKEDCQLDLQAS.

It belongs to the Crl family.

Its subcellular location is the cytoplasm. Binds to the sigma-S subunit of RNA polymerase, activating expression of sigma-S-regulated genes. Stimulates RNA polymerase holoenzyme formation and may bind to several other sigma factors, such as sigma-70 and sigma-32. This Photobacterium profundum (strain SS9) protein is Sigma factor-binding protein Crl.